The sequence spans 317 residues: 1-phosphatidylinositol phosphodiesterase (317 aa).

The signal sequence occupies residues 1 to 22 (MYKNYLQRTLVLLLCFILYFFT). In terms of domain architecture, PI-PLC X-box spans 58-196 (LAALSIPGTH…LKDVRGKILL (139 aa)). His67 serves as the catalytic Proton acceptor. His115 serves as the catalytic Proton donor.

In terms of assembly, monomer.

The protein resides in the secreted. It localises to the cytoplasm. The catalysed reaction is a 1,2-diacyl-sn-glycero-3-phospho-(1D-myo-inositol) = 1D-myo-inositol 1,2-cyclic phosphate + a 1,2-diacyl-sn-glycerol. Functionally, cleaves glycosylphosphatidylinositol (GPI) and phosphatidylinositol (PI) anchors but not PI phosphates. Important factor in pathogenesis, PI-PLC activity is present only in virulent listeria species. It may participate in the lysis of the phagolysosomal membrane. In Listeria monocytogenes serovar 1/2a (strain ATCC BAA-679 / EGD-e), this protein is 1-phosphatidylinositol phosphodiesterase (plcA).